A 766-amino-acid polypeptide reads, in one-letter code: 1,4-alpha-glucan branching enzyme GlgB (766 aa).

The active-site Nucleophile is aspartate 431. The active-site Proton donor is the glutamate 484.

Belongs to the glycosyl hydrolase 13 family. GlgB subfamily. In terms of assembly, monomer.

The enzyme catalyses Transfers a segment of a (1-&gt;4)-alpha-D-glucan chain to a primary hydroxy group in a similar glucan chain.. It participates in glycan biosynthesis; glycogen biosynthesis. Functionally, catalyzes the formation of the alpha-1,6-glucosidic linkages in glycogen by scission of a 1,4-alpha-linked oligosaccharide from growing alpha-1,4-glucan chains and the subsequent attachment of the oligosaccharide to the alpha-1,6 position. The protein is 1,4-alpha-glucan branching enzyme GlgB of Thermosynechococcus vestitus (strain NIES-2133 / IAM M-273 / BP-1).